A 31-amino-acid chain; its full sequence is Cyclotide mden-K (31 aa).

The cyclopeptide (Gly-Asn) cross-link spans 1-31 (GSIPCGESCVWIPCISSVVGCACKNKVCYKN). 3 disulfides stabilise this stretch: Cys5–Cys21, Cys9–Cys23, and Cys14–Cys28.

This sequence belongs to the cyclotide family. Bracelet subfamily. This is a cyclic peptide.

In terms of biological role, probably participates in a plant defense mechanism. In Melicytus dentatus (Tree violet), this protein is Cyclotide mden-K.